Consider the following 336-residue polypeptide: MTALISQPDLLPPPAPERCPPQQTARLFRETPLLLDCGQVVQDVRVAYHTYGTPSDHAILVLHALTGTSAVHEWWPDFLGEGKPLDPTRDYIVCANVLGGCAGSTGPAELPRVNGEDPPLTLRDMARVGRALLEELGVRRVSVIGASMGGMLAYAWLLECPDLVDRAVIIGAPARHSPWAIGLNTAARNAIRAAPGGEGLKVARQIAMLSYRSPESFALTQSGWGTRRPGTPDITTYLEHQGEKLSTRFCERSYLALTGAMDRFQPTDAELRSIRVPVLVVGISSDVLYPPAEVRTYAGLLPRGQYLELQSPHGHDAFLIDPQGLPEAAAAFLHGA.

The AB hydrolase-1 domain occupies 58–321; that stretch reads AILVLHALTG…PHGHDAFLID (264 aa). The active-site Nucleophile is Ser-147. Arg-204 is a binding site for substrate. Catalysis depends on residues Asp-286 and His-315. Asp-316 is a substrate binding site.

This sequence belongs to the AB hydrolase superfamily. MetX family. Homodimer.

The protein resides in the cytoplasm. The catalysed reaction is L-homoserine + acetyl-CoA = O-acetyl-L-homoserine + CoA. The protein operates within amino-acid biosynthesis; L-methionine biosynthesis via de novo pathway; O-acetyl-L-homoserine from L-homoserine: step 1/1. Functionally, transfers an acetyl group from acetyl-CoA to L-homoserine, forming acetyl-L-homoserine. In Deinococcus geothermalis (strain DSM 11300 / CIP 105573 / AG-3a), this protein is Homoserine O-acetyltransferase.